Consider the following 199-residue polypeptide: dITP/XTP pyrophosphatase (199 aa).

Residue 7–12 coordinates substrate; it reads SNNPGK. Asp68 (proton acceptor) is an active-site residue. Asp68 is a Mg(2+) binding site. Residues Ala69, 154–157, Lys177, and 182–183 contribute to the substrate site; these read FGFD and HR.

It belongs to the HAM1 NTPase family. In terms of assembly, homodimer. Mg(2+) is required as a cofactor.

The catalysed reaction is XTP + H2O = XMP + diphosphate + H(+). It carries out the reaction dITP + H2O = dIMP + diphosphate + H(+). It catalyses the reaction ITP + H2O = IMP + diphosphate + H(+). In terms of biological role, pyrophosphatase that catalyzes the hydrolysis of nucleoside triphosphates to their monophosphate derivatives, with a high preference for the non-canonical purine nucleotides XTP (xanthosine triphosphate), dITP (deoxyinosine triphosphate) and ITP. Seems to function as a house-cleaning enzyme that removes non-canonical purine nucleotides from the nucleotide pool, thus preventing their incorporation into DNA/RNA and avoiding chromosomal lesions. The chain is dITP/XTP pyrophosphatase from Verminephrobacter eiseniae (strain EF01-2).